Here is a 401-residue protein sequence, read N- to C-terminus: L-threonine ammonia-lyase (401 aa).

K51 carries the post-translational modification N6-(pyridoxal phosphate)lysine. Pyridoxal 5'-phosphate-binding positions include N78, G178–L181, and S301. One can recognise an ACT domain in the interval F326–G401.

It belongs to the serine/threonine dehydratase family. Homotetramer. Requires pyridoxal 5'-phosphate as cofactor.

It catalyses the reaction L-threonine = 2-oxobutanoate + NH4(+). It carries out the reaction L-serine = pyruvate + NH4(+). The protein operates within amino-acid biosynthesis; L-isoleucine biosynthesis; 2-oxobutanoate from L-threonine: step 1/1. Activity is insensitive to allosteric regulators L-valine and L-isoleucine at low concentrations, while these L-amino acids are inhibitors at high concentrations. Is insensitive to ammonium chloride and AMP. Inhibited in the presence of aminoxyacetic acid (AOAA), an inhibitor of pyridoxal phosphate-dependent enzymes. Functionally, catalyzes the conversion of L-threonine to 2-oxobutanoate and ammonia. Can also use L-serine, but the catalytic efficiency toward L-threonine is about sixfold higher than that toward L-serine. Also shows weak activity toward L-allo-threonine, but cannot use the corresponding D-amino acids. Does not exhibit racemase activity toward various amino acids, including serine. Physiologically, is likely involved in the threonine-dependent pathway of isoleucine biosynthesis. The protein is L-threonine ammonia-lyase of Thermotoga maritima (strain ATCC 43589 / DSM 3109 / JCM 10099 / NBRC 100826 / MSB8).